A 43-amino-acid chain; its full sequence is Large ribosomal subunit protein uL5 (43 aa).

Belongs to the universal ribosomal protein uL5 family. As to quaternary structure, part of the 50S ribosomal subunit; part of the 5S rRNA/L5/L18/L25 subcomplex. Contacts the 5S rRNA and the P site tRNA. Forms a bridge to the 30S subunit in the 70S ribosome.

In terms of biological role, this is one of the proteins that bind and probably mediate the attachment of the 5S RNA into the large ribosomal subunit, where it forms part of the central protuberance. In the 70S ribosome it contacts protein S13 of the 30S subunit (bridge B1b), connecting the 2 subunits; this bridge is implicated in subunit movement. Contacts the P site tRNA; the 5S rRNA and some of its associated proteins might help stabilize positioning of ribosome-bound tRNAs. The sequence is that of Large ribosomal subunit protein uL5 (rplE) from Proteus vulgaris.